The chain runs to 450 residues: Tubulin alpha-2 chain (450 aa).

Gln-11 contacts GTP. Lys-40 carries the post-translational modification N6-acetyllysine. GTP contacts are provided by Glu-71, Gly-144, Thr-145, Thr-179, Asn-206, and Asn-228. Position 71 (Glu-71) interacts with Mg(2+). Glu-254 is an active-site residue.

Belongs to the tubulin family. As to quaternary structure, dimer of alpha and beta chains. A typical microtubule is a hollow water-filled tube with an outer diameter of 25 nm and an inner diameter of 15 nM. Alpha-beta heterodimers associate head-to-tail to form protofilaments running lengthwise along the microtubule wall with the beta-tubulin subunit facing the microtubule plus end conferring a structural polarity. Microtubules usually have 13 protofilaments but different protofilament numbers can be found in some organisms and specialized cells. Requires Mg(2+) as cofactor. Post-translationally, undergoes a tyrosination/detyrosination cycle, the cyclic removal and re-addition of a C-terminal tyrosine residue by the enzymes tubulin tyrosine carboxypeptidase (TTCP) and tubulin tyrosine ligase (TTL), respectively. In terms of processing, acetylation of alpha chains at Lys-40 stabilizes microtubules and affects affinity and processivity of microtubule motors. This modification has a role in multiple cellular functions, ranging from cell motility, cell cycle progression or cell differentiation to intracellular trafficking and signaling.

It localises to the cytoplasm. The protein localises to the cytoskeleton. The enzyme catalyses GTP + H2O = GDP + phosphate + H(+). Its function is as follows. Tubulin is the major constituent of microtubules, a cylinder consisting of laterally associated linear protofilaments composed of alpha- and beta-tubulin heterodimers. Microtubules grow by the addition of GTP-tubulin dimers to the microtubule end, where a stabilizing cap forms. Below the cap, tubulin dimers are in GDP-bound state, owing to GTPase activity of alpha-tubulin. The chain is Tubulin alpha-2 chain from Gossypium hirsutum (Upland cotton).